We begin with the raw amino-acid sequence, 619 residues long: ATP-dependent RNA helicase abstrakt (619 aa).

Positions 1-11 (MAHVKRYRRSS) are enriched in basic residues. 2 disordered regions span residues 1–25 (MAHV…EDYV) and 50–69 (ETAQ…SQGA). Residues S11, S13, S14, S56, S57, S58, and S66 each carry the phosphoserine modification. Positions 177 to 205 (RSFREMKFPKGILNGLAAKGIKNPTPIQV) match the Q motif motif. The 185-residue stretch at 208 to 392 (LPTVLAGRDL…RSALVKPVTI (185 aa)) folds into the Helicase ATP-binding domain. 221–228 (AFTGSGKT) serves as a coordination point for ATP. Positions 340–343 (DEAD) match the DEAD box motif. The 161-residue stretch at 403–563 (NVTQQVEYVK…EVPDFLDELA (161 aa)) folds into the Helicase C-terminal domain. The CCHC-type zinc finger occupies 577–594 (HGCTYCGGLGHRITECPK).

It belongs to the DEAD box helicase family. DDX41 subfamily.

The protein resides in the nucleus. It carries out the reaction ATP + H2O = ADP + phosphate + H(+). In terms of biological role, ATP-dependent RNA helicase. Is essential for the directed and fasciculated early outgrowth of the bolwig nerves, as well as for its navigation at later stages. Is required during post-transcriptional gene expression. Plays a role during morphogenetic process, apoptosis and the establishment of cell polarity. In Drosophila melanogaster (Fruit fly), this protein is ATP-dependent RNA helicase abstrakt (abs).